The sequence spans 348 residues: Dihydroorotase (348 aa).

Residues His-14 and His-16 each coordinate Zn(2+). Substrate-binding positions include 16–18 (HLR) and Asn-42. Zn(2+) is bound by residues Lys-100, His-137, and His-175. An N6-carboxylysine modification is found at Lys-100. His-137 serves as a coordination point for substrate. Leu-220 is a binding site for substrate. Zn(2+) is bound at residue Asp-248. Asp-248 is an active-site residue. Residues His-252 and Ala-264 each coordinate substrate.

It belongs to the metallo-dependent hydrolases superfamily. DHOase family. Class II DHOase subfamily. Homodimer. Requires Zn(2+) as cofactor.

The enzyme catalyses (S)-dihydroorotate + H2O = N-carbamoyl-L-aspartate + H(+). It functions in the pathway pyrimidine metabolism; UMP biosynthesis via de novo pathway; (S)-dihydroorotate from bicarbonate: step 3/3. Functionally, catalyzes the reversible cyclization of carbamoyl aspartate to dihydroorotate. The chain is Dihydroorotase from Pseudomonas aeruginosa (strain ATCC 15692 / DSM 22644 / CIP 104116 / JCM 14847 / LMG 12228 / 1C / PRS 101 / PAO1).